We begin with the raw amino-acid sequence, 331 residues long: tRNA-cytidine(32) 2-sulfurtransferase (331 aa).

A PP-loop motif motif is present at residues 73–78 (SGGKDS). Positions 148, 151, and 239 each coordinate [4Fe-4S] cluster.

It belongs to the TtcA family. As to quaternary structure, homodimer. Mg(2+) serves as cofactor. Requires [4Fe-4S] cluster as cofactor.

The protein localises to the cytoplasm. The catalysed reaction is cytidine(32) in tRNA + S-sulfanyl-L-cysteinyl-[cysteine desulfurase] + AH2 + ATP = 2-thiocytidine(32) in tRNA + L-cysteinyl-[cysteine desulfurase] + A + AMP + diphosphate + H(+). It participates in tRNA modification. Functionally, catalyzes the ATP-dependent 2-thiolation of cytidine in position 32 of tRNA, to form 2-thiocytidine (s(2)C32). The sulfur atoms are provided by the cysteine/cysteine desulfurase (IscS) system. This Burkholderia mallei (strain NCTC 10247) protein is tRNA-cytidine(32) 2-sulfurtransferase.